A 51-amino-acid polypeptide reads, in one-letter code: uncharacterized protein (51 aa).

Residues 1 to 51 (MKRKAEVNEAIKNNNTPTESMDPNSYKTQYHDDPNFRGANRNSKQGQQGGM) are disordered. 2 stretches are compositionally biased toward polar residues: residues 11 to 28 (IKNN…SYKT) and 40 to 51 (NRNSKQGQQGGM).

This is an uncharacterized protein from Bacillus subtilis (strain 168).